A 365-amino-acid polypeptide reads, in one-letter code: Mitogen-activated protein kinase 13 (365 aa).

One can recognise a Protein kinase domain in the interval 25–308 (YVSPTHVGSG…AAQALTHPFF (284 aa)). 31 to 39 (VGSGAYGSV) is a binding site for ATP. S47 is subject to Phosphoserine. K54 contacts ATP. D150 acts as the Proton acceptor in catalysis. T180 is subject to Phosphothreonine; by MAP2K3, MAP2K4, MAP2K6 and MAP2K7. Residues 180-182 (TGY) carry the TXY motif. Position 182 is a phosphotyrosine; by MAP2K3, MAP2K4, MAP2K6 and MAP2K7 (Y182). S350 is modified (phosphoserine).

The protein belongs to the protein kinase superfamily. CMGC Ser/Thr protein kinase family. MAP kinase subfamily. Interacts with MAPK8IP2. It depends on Mg(2+) as a cofactor. In terms of processing, dually phosphorylated on Thr-180 and Tyr-182 by MAP2K3/MKK3, MAP2K4/MKK4, MAP2K6/MKK6 and MAP2K7/MKK7, which activates the enzyme. Dephosphorylated by dual specificity phosphatase DUSP1.

It catalyses the reaction L-seryl-[protein] + ATP = O-phospho-L-seryl-[protein] + ADP + H(+). It carries out the reaction L-threonyl-[protein] + ATP = O-phospho-L-threonyl-[protein] + ADP + H(+). Its activity is regulated as follows. Activated by phosphorylation on threonine and tyrosine by dual specificity kinases, MAP2K3/MKK3, MAP2K6/MKK6, MAP2K4/MKK4 and MAP2K7/MKK7. Activation by ultraviolet radiation, hyperosmotic shock, anisomycin or by TNF-alpha is mediated by MAP2K3/MKK3. Inhibited by dual specificity phosphatase DUSP1. Functionally, serine/threonine kinase which acts as an essential component of the MAP kinase signal transduction pathway. MAPK13 is one of the four p38 MAPKs which play an important role in the cascades of cellular responses evoked by extracellular stimuli such as pro-inflammatory cytokines or physical stress leading to direct activation of transcription factors such as ELK1 and ATF2. Accordingly, p38 MAPKs phosphorylate a broad range of proteins and it has been estimated that they may have approximately 200 to 300 substrates each. MAPK13 is one of the less studied p38 MAPK isoforms. Some of the targets are downstream kinases such as MAPKAPK2, which are activated through phosphorylation and further phosphorylate additional targets. Plays a role in the regulation of protein translation by phosphorylating and inactivating EEF2K. Involved in cytoskeletal remodeling through phosphorylation of MAPT and STMN1. Mediates UV irradiation induced up-regulation of the gene expression of CXCL14. Plays an important role in the regulation of epidermal keratinocyte differentiation, apoptosis and skin tumor development. Phosphorylates the transcriptional activator MYB in response to stress which leads to rapid MYB degradation via a proteasome-dependent pathway. MAPK13 also phosphorylates and down-regulates PRKD1 during regulation of insulin secretion in pancreatic beta cells. The sequence is that of Mitogen-activated protein kinase 13 (MAPK13) from Pan troglodytes (Chimpanzee).